A 488-amino-acid polypeptide reads, in one-letter code: Germacrene A hydroxylase (488 aa).

The Cytoplasmic segment spans residues Met1–Thr6. A helical; Signal-anchor for type II membrane protein transmembrane segment spans residues Thr7 to Thr23. Over Arg24–Phe488 the chain is Lumenal. Asn260 and Asn379 each carry an N-linked (GlcNAc...) asparagine glycan. Residue Cys432 coordinates heme.

It belongs to the cytochrome P450 family. It depends on heme as a cofactor.

It localises to the endoplasmic reticulum membrane. The protein localises to the microsome membrane. It carries out the reaction (+)-(R)-germacrene A + 3 reduced [NADPH--hemoprotein reductase] + 3 O2 = germacra-1(10),4,11(13)-trien-12-oate + 3 oxidized [NADPH--hemoprotein reductase] + 4 H2O + 4 H(+). Its pathway is secondary metabolite biosynthesis; terpenoid biosynthesis. With respect to regulation, inhibited by cytochrome C, miconazole, aminobenzotriazole, metyrapone and clotrimazole. Involved in the biosynthesis of germacrene-derived sesquiterpene lactones. Catalyzes three consecutive oxidations of germacrene A to produce germacrene A acid. Could also catalyze the three-step oxidation of non-natural substrate amorphadiene to artemisinic acid. Can use beta-elemene as substrate. This chain is Germacrene A hydroxylase, found in Cichorium intybus (Chicory).